The primary structure comprises 470 residues: ATP synthase subunit beta (470 aa).

158-165 (GGAGVGKT) contributes to the ATP binding site.

The protein belongs to the ATPase alpha/beta chains family. F-type ATPases have 2 components, CF(1) - the catalytic core - and CF(0) - the membrane proton channel. CF(1) has five subunits: alpha(3), beta(3), gamma(1), delta(1), epsilon(1). CF(0) has three main subunits: a(1), b(2) and c(9-12). The alpha and beta chains form an alternating ring which encloses part of the gamma chain. CF(1) is attached to CF(0) by a central stalk formed by the gamma and epsilon chains, while a peripheral stalk is formed by the delta and b chains.

It is found in the cell membrane. It catalyses the reaction ATP + H2O + 4 H(+)(in) = ADP + phosphate + 5 H(+)(out). Produces ATP from ADP in the presence of a proton gradient across the membrane. The catalytic sites are hosted primarily by the beta subunits. This chain is ATP synthase subunit beta, found in Alkalihalophilus pseudofirmus (strain ATCC BAA-2126 / JCM 17055 / OF4) (Bacillus pseudofirmus).